The sequence spans 287 residues: Mitochondrial glycine transporter B (287 aa).

Solcar repeat units lie at residues 7-97, 104-188, and 198-282; these read HPAL…LKQH, PSAG…AKKA, and IAPL…LMAR. 6 helical membrane passes run 13–38, 72–98, 110–135, 163–186, 202–228, and 257–275; these read FMCGSLSGTCSTLLFQPLDLVKTRLQ, GVSPSFMRCIPGVGIYFSTFYSLKQHY, VLLGAGARCVAGVAMLPFTVIKTRFE, GLTATLLRDAPFSGIYVMFYSQAK, VNFGCGVVAGILASLATQPADVIKTHM, and GAVPRSLRRTLMAAMAWTV.

The protein belongs to the mitochondrial carrier (TC 2.A.29) family. SLC25A38 subfamily. In terms of tissue distribution, at 24 hours post-fertilization, expressed predominantly in posterior blood island, posterior cardinal vein and circulating blood. At 34 hours post-fertilization, becomes restricted to posterior blood island and circulating blood.

It is found in the mitochondrion inner membrane. It catalyses the reaction glycine(in) = glycine(out). Mitochondrial glycine transporter that imports glycine into the mitochondrial matrix. Plays an important role in providing glycine for the first enzymatic step in heme biosynthesis, the condensation of glycine with succinyl-CoA to produce 5-aminolevulinate (ALA) in the mitochondrial matrix. Required during erythropoiesis. In terms of biological role, may play a role as pro-apoptotic protein that induces caspase-dependent apoptosis. The sequence is that of Mitochondrial glycine transporter B (slc25a38b) from Danio rerio (Zebrafish).